The chain runs to 317 residues: Flagellar hook-associated protein 3 (317 aa).

Belongs to the bacterial flagellin family.

It localises to the secreted. Its subcellular location is the bacterial flagellum. This Salmonella typhimurium (strain LT2 / SGSC1412 / ATCC 700720) protein is Flagellar hook-associated protein 3 (flgL).